The following is an 832-amino-acid chain: MGKKSKVGKSRRDKFYHLAKETGFRSRSAFKLLQLNRKFQFLQKARALLDLCAAPGGWLQVASKFMPVSSLVIGVDLVPIKPIPNVVTLQEDITTEKCRQALRKELQTWKVDVVLNDGAPNVGASWVHDAYSQANLTLMALKLACEFLCKGGWFITKVFRSRDYQPLLWIFQQFFHKVQATKPQASRNESAEIFVVCQGYQAPDKIDSKFFDPKYAFKEVEVHAKSVSELVSKKKPKAEGYADGDTTLYHRFTLMDFLKAPNPVDFLSKANEITLGDGELENHSSTTEELRQCCKDIRVLGRKELRALLNWRTKLRRFLTKKLKEQAKELDINLSSGEEEEGREEEEKTSPKAAADEMVKEEEEEVELALAEMKAKELAELKRKKKKILKEQRKQRERVELKMDLPGVSIADDGDTSMFSLQTIQRTQLLNEVARGDMASADALLEMRPGDDDICVSDADDEDDVSLASDLDPEELVEIEARQRRLERERREQGVKRVKPKVEEEEEEEEEEENPLLVPLEEKSVLQERQTSLWFGKDAFAGIEDDADEDLELGQSQMLAERQRESQTGKTKKKGQKKKVPQESTAAEPQDAADTGADTAEAEAEQSSDDDSSSDEEGPPTPVGRKRGLVEPCGFEVVPIEDPVKKARVLDAEGLALGSVIATSKKAKRDLIDDSFNRYSFNEEEGELPEWFTEEEKQHRRKQIPLDKQTVEEYRQRWRQINARPIKKVAEAKARKKRRMLKKMEQMKKKAEAVVSTVDISEREKVAQLRRIYKKAGLGKEKRQVTYLVAKKGVGPRVRRPPGVKGQFKVVDSRLKKDVRAQKRKEQKKRRK.

S-adenosyl-L-methionine is bound by residues Gly-56, Trp-58, Asp-76, Asp-92, and Asp-117. Residue Lys-157 is the Proton acceptor of the active site. Disordered stretches follow at residues 332–358 (INLS…ADEM), 485–523 (RLER…LEEK), and 546–631 (DADE…GLVE). Composition is skewed to basic and acidic residues over residues 345 to 358 (EEEK…ADEM) and 485 to 495 (RLERERREQGV). Positions 503–514 (EEEEEEEEEEEN) are enriched in acidic residues. A compositionally biased stretch (basic residues) spans 570–579 (KTKKKGQKKK). Over residues 600–618 (AEAEAEQSSDDDSSSDEEG) the composition is skewed to acidic residues. Residues 726-758 (IKKVAEAKARKKRRMLKKMEQMKKKAEAVVSTV) adopt a coiled-coil conformation. The interval 795–832 (GPRVRRPPGVKGQFKVVDSRLKKDVRAQKRKEQKKRRK) is disordered. The segment covering 811–821 (VDSRLKKDVRA) has biased composition (basic and acidic residues). Residues 822–832 (QKRKEQKKRRK) are compositionally biased toward basic residues.

It belongs to the class I-like SAM-binding methyltransferase superfamily. RNA methyltransferase RlmE family. SPB1 subfamily. In terms of assembly, interacts with NIP7.

It localises to the nucleus. The protein localises to the nucleolus. The enzyme catalyses a ribonucleotide in rRNA + S-adenosyl-L-methionine = a 2'-O-methylribonucleotide in rRNA + S-adenosyl-L-homocysteine + H(+). In terms of biological role, RNA 2'-O-methyltransferase involved in the processing of the 34S pre-rRNA to 18S rRNA and in 40S ribosomal subunit formation. This is pre-rRNA 2'-O-ribose RNA methyltransferase FTSJ3 from Gallus gallus (Chicken).